The chain runs to 378 residues: MSPMNRQRKNKSNVLNEKDERPGCIIKEKSSVRSMAKTQPTSGRTISLSEINKPIALSKKNTEIKAAVEIQNRLTKKMAKNSERRKKMAHGPEMTAQNRTQERIDFVEFLDRHYQVMQAGVSTVKVHKMHYTKEEFENVIYEAQTIFSSEKALVDIDPPCVVVGNLHGQFNDLINMFILLGRPPETVYVFTECVTSIPKCGEEIWALFQRCFNNLPISALIATKILCMHGGLSPALTCLDELRNHPKPIRNPFRGIVNDMLWADPDPSVFEWKTSSRGSGFTFGTNVIDDVCKRLGVELIIRAHQMCFDGYWVLSGRKLITIFSAPMYCNFYKNTGCVLKVDETLGIQTVAFVPESENIEKIIEEMNRVWDISIDCIE.

Residues 1 to 11 (MSPMNRQRKNK) are compositionally biased toward basic residues. Residues 1–23 (MSPMNRQRKNKSNVLNEKDERPG) are disordered.

This is an uncharacterized protein from Caenorhabditis elegans.